Reading from the N-terminus, the 201-residue chain is uncharacterized protein (201 aa).

A signal peptide spans 1–25 (MYRAGVTLLVVAVVSLGRWDVVTMA). Topologically, residues 26–170 (AAIGIGWYEP…AYFRRSNHRA (145 aa)) are extracellular. N-linked (GlcNAc...) asparagine; by host glycosylation is found at N46, N49, N55, N84, N95, N113, N122, N137, and N144. The chain crosses the membrane as a helical span at residues 171–191 (FMIVILTQVVFVVFIINASFI). The Cytoplasmic portion of the chain corresponds to 192–201 (WSWTFRRHKR).

This sequence belongs to the HHV-5 UL120 protein family.

Its subcellular location is the host membrane. This is an uncharacterized protein from Homo sapiens (Human).